The sequence spans 122 residues: Large ribosomal subunit protein uL14 (122 aa).

It belongs to the universal ribosomal protein uL14 family. In terms of assembly, part of the 50S ribosomal subunit. Forms a cluster with proteins L3 and L19. In the 70S ribosome, L14 and L19 interact and together make contacts with the 16S rRNA in bridges B5 and B8.

Its function is as follows. Binds to 23S rRNA. Forms part of two intersubunit bridges in the 70S ribosome. This chain is Large ribosomal subunit protein uL14, found in Acinetobacter baylyi (strain ATCC 33305 / BD413 / ADP1).